Reading from the N-terminus, the 697-residue chain is Putative cryptochrome DASH (697 aa).

In terms of domain architecture, Photolyase/cryptochrome alpha/beta spans 5–164 (KLLVYLLRRD…GFKLWHDEKY (160 aa)). Disordered regions lie at residues 170–215 (DNGL…FPSW) and 554–697 (FSVT…PPHI). Basic and acidic residues predominate over residues 188–198 (KTQEPLRERPR). Residues 560–569 (RGNRRPYRWR) are compositionally biased toward basic residues. Positions 578–590 (GRGGRGGGTGNTS) are enriched in gly residues. Low complexity-rich tracts occupy residues 659 to 675 (QQQQ…YAHQ) and 683 to 697 (RQQQ…PPHI).

This sequence belongs to the DNA photolyase class-1 family. FAD is required as a cofactor. It depends on (6R)-5,10-methylene-5,6,7,8-tetrahydrofolate as a cofactor.

Functionally, may have a photoreceptor function. This is Putative cryptochrome DASH from Gibberella zeae (strain ATCC MYA-4620 / CBS 123657 / FGSC 9075 / NRRL 31084 / PH-1) (Wheat head blight fungus).